Reading from the N-terminus, the 223-residue chain is Urease accessory protein UreF (223 aa).

It belongs to the UreF family. UreD, UreF and UreG form a complex that acts as a GTP-hydrolysis-dependent molecular chaperone, activating the urease apoprotein by helping to assemble the nickel containing metallocenter of UreC. The UreE protein probably delivers the nickel.

It is found in the cytoplasm. Required for maturation of urease via the functional incorporation of the urease nickel metallocenter. The chain is Urease accessory protein UreF from Rhizobium leguminosarum bv. viciae.